Consider the following 64-residue polypeptide: Large ribosomal subunit protein bL32 (64 aa).

Over residues 1-16 (MAVPKHRKSKAKKRSR) the composition is skewed to basic residues. The segment at 1–22 (MAVPKHRKSKAKKRSRQAANDK) is disordered.

It belongs to the bacterial ribosomal protein bL32 family.

The protein is Large ribosomal subunit protein bL32 of Brachyspira hyodysenteriae (strain ATCC 49526 / WA1).